The primary structure comprises 317 residues: Tyrosine--tRNA ligase (317 aa).

Y33 serves as a coordination point for L-tyrosine. The 'HIGH' region motif lies at 38 to 46; sequence PSGKIHMGH. Residues Y155, Q159, D162, and Q177 each coordinate L-tyrosine. The short motif at 211–215 is the 'KMSKS' region element; sequence KMASS. S214 lines the ATP pocket.

Belongs to the class-I aminoacyl-tRNA synthetase family. TyrS type 3 subfamily. In terms of assembly, homodimer.

The protein resides in the cytoplasm. It carries out the reaction tRNA(Tyr) + L-tyrosine + ATP = L-tyrosyl-tRNA(Tyr) + AMP + diphosphate + H(+). Catalyzes the attachment of tyrosine to tRNA(Tyr) in a two-step reaction: tyrosine is first activated by ATP to form Tyr-AMP and then transferred to the acceptor end of tRNA(Tyr). This chain is Tyrosine--tRNA ligase, found in Methanosarcina mazei (strain ATCC BAA-159 / DSM 3647 / Goe1 / Go1 / JCM 11833 / OCM 88) (Methanosarcina frisia).